The chain runs to 357 residues: Isopentenyl-diphosphate delta-isomerase (357 aa).

12–13 (RK) contributes to the substrate binding site. Residues S70, 71–73 (SMT), S101, and N130 contribute to the FMN site. 101–103 (SMR) provides a ligand contact to substrate. Q165 contacts substrate. A Mg(2+)-binding site is contributed by E166. FMN-binding positions include K197 and 310–311 (AR).

The protein belongs to the IPP isomerase type 2 family. In terms of assembly, homooctamer. Dimer of tetramers. FMN is required as a cofactor. It depends on NADPH as a cofactor. Requires Mg(2+) as cofactor.

Its subcellular location is the cytoplasm. The enzyme catalyses isopentenyl diphosphate = dimethylallyl diphosphate. Involved in the biosynthesis of isoprenoids. Catalyzes the 1,3-allylic rearrangement of the homoallylic substrate isopentenyl (IPP) to its allylic isomer, dimethylallyl diphosphate (DMAPP). In Pelodictyon phaeoclathratiforme (strain DSM 5477 / BU-1), this protein is Isopentenyl-diphosphate delta-isomerase.